We begin with the raw amino-acid sequence, 533 residues long: DELLA protein 2 (533 aa).

Over residues 1-12 (MKREHKLEHEDM) the composition is skewed to basic and acidic residues. The tract at residues 1–24 (MKREHKLEHEDMSSGSGKSGVCWE) is disordered. The DELLA motif signature appears at 31–35 (DELLA). The GRAS domain maps to 157–522 (VETQEKGIRL…RPLIATSAWK (366 aa)). Residues 164–218 (IRLVHSLMACAEAVEQNNLKMAEALVKQIGYLAVSQEGAMRKVATYFAEGLARRI) form a leucine repeat I (LRI) region. Residues 166–203 (LVHSLMACAEAVEQNNLKMAEALVKQIGYLAVSQEGAM) form a required for possible homodimerization region. The short motif at 171 to 175 (MACAE) is the LxCxE motif; degenerate element. Positions 232–297 (QIHFYETCPN…GGPPAFRLTG (66 aa)) are VHIID. Residues 263–267 (VHVID) carry the VHIID motif. The interval 311–343 (QVGWRLAQFAQTIHVQFEYRGFVANSLADLDAS) is leucine repeat II (LRII). The tract at residues 355–443 (VAVNSVFELH…EVYLGKQICN (89 aa)) is PFYRE. Residues 363–367 (LHKLN) carry the LXXLL motif; degenerate motif. An SAW region spans residues 446–522 (ACEGTDRVER…RPLIATSAWK (77 aa)).

This sequence belongs to the GRAS family. DELLA subfamily. In terms of assembly, may be a homodimer. Post-translationally, ubiquitinated. Upon GA application it is ubiquitinated, leading to its subsequent degradation.

The protein resides in the nucleus. In terms of biological role, probable transcriptional regulator that acts as a repressor of the gibberellin (GA) signaling pathway. Probably acts by participating in large multiprotein complexes that repress transcription of GA-inducible genes. Upon GA application, it is degraded by the proteasome, allowing the GA signaling pathway. Together with DELLA1, required to enable arbuscule development during arbuscular mycorrhizal (AM) symbiosis with AM fungi (e.g. Glomus versiforme) via the regulation of RAM1 which, in turn, regulates various AM genes (e.g. NSP1, NSP2, PT4, LEC5, RAM2, EXO70I, STR and RAD1). This Medicago truncatula (Barrel medic) protein is DELLA protein 2.